Here is a 29-residue protein sequence, read N- to C-terminus: MDIISIGWVSLMVVFTFSISLVVWGRSGL.

A helical membrane pass occupies residues 3 to 23; it reads IISIGWVSLMVVFTFSISLVV.

The protein belongs to the PetN family. The 4 large subunits of the cytochrome b6-f complex are cytochrome b6, subunit IV (17 kDa polypeptide, PetD), cytochrome f and the Rieske protein, while the 4 small subunits are PetG, PetL, PetM and PetN. The complex functions as a dimer.

It is found in the plastid. Its subcellular location is the chloroplast thylakoid membrane. Its function is as follows. Component of the cytochrome b6-f complex, which mediates electron transfer between photosystem II (PSII) and photosystem I (PSI), cyclic electron flow around PSI, and state transitions. The protein is Cytochrome b6-f complex subunit 8 of Staurastrum punctulatum (Green alga).